The primary structure comprises 252 residues: Phosphoglycolate phosphatase (252 aa).

D13 functions as the Nucleophile in the catalytic mechanism. Residues D13, D15, and D192 each coordinate Mg(2+).

It belongs to the HAD-like hydrolase superfamily. CbbY/CbbZ/Gph/YieH family. As to quaternary structure, monomer. Mg(2+) is required as a cofactor. Chloride serves as cofactor.

The catalysed reaction is 2-phosphoglycolate + H2O = glycolate + phosphate. It functions in the pathway organic acid metabolism; glycolate biosynthesis; glycolate from 2-phosphoglycolate: step 1/1. Specifically catalyzes the dephosphorylation of 2-phosphoglycolate. Is involved in the dissimilation of the intracellular 2-phosphoglycolate formed during the DNA repair of 3'-phosphoglycolate ends, a major class of DNA lesions induced by oxidative stress. This Salmonella typhimurium (strain LT2 / SGSC1412 / ATCC 700720) protein is Phosphoglycolate phosphatase.